We begin with the raw amino-acid sequence, 142 residues long: ATP synthase epsilon chain (142 aa).

This sequence belongs to the ATPase epsilon chain family. As to quaternary structure, F-type ATPases have 2 components, CF(1) - the catalytic core - and CF(0) - the membrane proton channel. CF(1) has five subunits: alpha(3), beta(3), gamma(1), delta(1), epsilon(1). CF(0) has three main subunits: a, b and c.

The protein localises to the cell inner membrane. Its function is as follows. Produces ATP from ADP in the presence of a proton gradient across the membrane. The polypeptide is ATP synthase epsilon chain (Coxiella burnetii (strain CbuK_Q154) (Coxiella burnetii (strain Q154))).